We begin with the raw amino-acid sequence, 338 residues long: Glycerol-3-phosphate dehydrogenase [NAD(P)+] (338 aa).

Positions 14, 15, 35, and 109 each coordinate NADPH. Sn-glycerol 3-phosphate contacts are provided by K109, G138, and T140. Residue A142 participates in NADPH binding. Residues K194, D247, S257, R258, and N259 each coordinate sn-glycerol 3-phosphate. K194 serves as the catalytic Proton acceptor. R258 serves as a coordination point for NADPH. Positions 282 and 284 each coordinate NADPH.

It belongs to the NAD-dependent glycerol-3-phosphate dehydrogenase family.

Its subcellular location is the cytoplasm. It carries out the reaction sn-glycerol 3-phosphate + NAD(+) = dihydroxyacetone phosphate + NADH + H(+). The catalysed reaction is sn-glycerol 3-phosphate + NADP(+) = dihydroxyacetone phosphate + NADPH + H(+). It functions in the pathway membrane lipid metabolism; glycerophospholipid metabolism. Its function is as follows. Catalyzes the reduction of the glycolytic intermediate dihydroxyacetone phosphate (DHAP) to sn-glycerol 3-phosphate (G3P), the key precursor for phospholipid synthesis. In Sodalis glossinidius (strain morsitans), this protein is Glycerol-3-phosphate dehydrogenase [NAD(P)+].